Here is a 125-residue protein sequence, read N- to C-terminus: Large ribosomal subunit protein bL12 (125 aa).

The protein belongs to the bacterial ribosomal protein bL12 family. In terms of assembly, homodimer. Part of the ribosomal stalk of the 50S ribosomal subunit. Forms a multimeric L10(L12)X complex, where L10 forms an elongated spine to which 2 to 4 L12 dimers bind in a sequential fashion. Binds GTP-bound translation factors.

Forms part of the ribosomal stalk which helps the ribosome interact with GTP-bound translation factors. Is thus essential for accurate translation. In Granulibacter bethesdensis (strain ATCC BAA-1260 / CGDNIH1), this protein is Large ribosomal subunit protein bL12.